We begin with the raw amino-acid sequence, 277 residues long: Small ribosomal subunit protein uS5 (277 aa).

Positions 18–40 are disordered; the sequence is AAGRPSWSWQRPGERARTPGRKA. The segment covering 29–40 has biased composition (basic and acidic residues); that stretch reads PGERARTPGRKA. The 64-residue stretch at 87-150 folds into the S5 DRBM domain; the sequence is LKDEVLKIMP…ILAKLSIIPV (64 aa).

It belongs to the universal ribosomal protein uS5 family. In terms of assembly, component of the small ribosomal subunit.

Its subcellular location is the cytoplasm. It is found in the nucleus. The protein resides in the nucleolus. Functionally, component of the ribosome, a large ribonucleoprotein complex responsible for the synthesis of proteins in the cell. The small ribosomal subunit (SSU) binds messenger RNAs (mRNAs) and translates the encoded message by selecting cognate aminoacyl-transfer RNA (tRNA) molecules. The large subunit (LSU) contains the ribosomal catalytic site termed the peptidyl transferase center (PTC), which catalyzes the formation of peptide bonds, thereby polymerizing the amino acids delivered by tRNAs into a polypeptide chain. The nascent polypeptides leave the ribosome through a tunnel in the LSU and interact with protein factors that function in enzymatic processing, targeting, and the membrane insertion of nascent chains at the exit of the ribosomal tunnel. Plays a role in the assembly and function of the 40S ribosomal subunit. Mutations in this protein affects the control of translational fidelity. Involved in nucleolar processing of pre-18S ribosomal RNA and ribosome assembly. The sequence is that of Small ribosomal subunit protein uS5 (rps2) from Ictalurus punctatus (Channel catfish).